The chain runs to 682 residues: MGGALSTDDPEQRASSVEELNQRLAHRFAAKCFEPLELTHLKENFFSRALDQHGIRYWNEEILSEFLGIPDGAGSAAAATSDGSLDAGPVIFRMVSYLGAFPFQNTMAPTVLTFESMVKVVVLLTERYGKVLKRGKKDRIKLLFGSLADVGRRDIITQLKEATEDSLESIGPFDPKSASPSTHNTGFLVDQPLNDEDEEDDDDLAIAALESLDAIEVFKHDQRIDKTVYESKISLTTFRRLLTLLLVTAPLRPLGRVSKFTTGLSKPSLDAVHEQVDSILAALEPGEASDGIGYKSFSKLVSTSLPYLFDPLTPLFEHLLFSKNLDLSRKRDSQTTNGLTNKPVPTPPSTPPISPPLSPVISTGGFDSRILNPAVLSHLSFFVSTNVHIPNIFRNRTHLHPVFSSTEHGESLTSFSHHVMTWQAPSILLVRGAVVSESSEEQLTTIGAYLPQPWKQTSSYSSRRSSEVPDPSTLPCLFELSPVHTVLQGSPSFSSLKPNMPVSHFSTKTGIAIGCVIPPSSRKSLGSDLHPKPAGGGSLLIDSALENATFIVSNGLNGPGVFLPPGISPVLSSTSLTASVASMSSSNQNITKSISIYNLEVWGIIPSTSLATQLDGSGSPIEKRDAISLQRAQWDFEAREAERRQAINMKVGGGEADVPTGRALLEMAGIIGDSYYSGHHRH.

2 disordered regions span residues 167–198 and 331–358; these read LESI…DEDE and RDSQ…PPLS. Over residues 344-358 the composition is skewed to pro residues; it reads VPTPPSTPPISPPLS. The 237-residue stretch at 369-605 folds into the TLDc domain; it reads RILNPAVLSH…IYNLEVWGII (237 aa).

Belongs to the RTC5 family.

The protein localises to the cytoplasm. Functionally, may be involved in a process influencing telomere capping. The sequence is that of Restriction of telomere capping protein 5 (RTC5) from Ajellomyces capsulatus (strain NAm1 / WU24) (Darling's disease fungus).